The sequence spans 2284 residues: RNA1 polyprotein (2284 aa).

Topologically, residues 569 to 1171 (CTAEEIFRMH…QVVVENYSLL (603 aa)) are cytoplasmic. Positions 751 to 919 (VSKLEEVHAR…DGSFFTPRAY (169 aa)) constitute an SF3 helicase domain. 781–788 (GASQSGKT) is a binding site for ATP. A helical transmembrane segment spans residues 1172-1192 (LTLVAILLLISAAYTLLSTVV). Residues 1193–1217 (ALAGCSSFAGGMVAVTAVNNASIPC) lie on the Lumenal side of the membrane. O-(5'-phospho-RNA)-serine is present on Ser1218. Residues 1243–1458 (GPSKGQGEHE…SVIPNYSSSF (216 aa)) form the Peptidase C3 domain. Active-site for picornain 3C-like protease activity residues include His1284, Glu1328, and Cys1420. Positions 1728-1852 (DVGYNCDYKA…TVAQSVMQYF (125 aa)) constitute a RdRp catalytic domain.

In terms of processing, specific enzymatic cleavages by picornain 3C-like protease in vivo yield mature proteins. Picornain 3C-like protease is autocatalytically processed. VPg is uridylylated by the polymerase and is covalently linked to the 5'-end of genomic RNA. This uridylylated form acts as a nucleotide-peptide primer for the polymerase.

It localises to the host endoplasmic reticulum lumen. Its subcellular location is the host endoplasmic reticulum membrane. The enzyme catalyses RNA(n) + a ribonucleoside 5'-triphosphate = RNA(n+1) + diphosphate. Functionally, picornain 3C-like protease is a thiol protease that cleaves the P1 and P2 polyproteins. This is RNA1 polyprotein from Vitis rupestris (Grape).